A 496-amino-acid polypeptide reads, in one-letter code: ATP synthase subunit beta 1 (496 aa).

ATP is bound at residue 167 to 174 (GGAGVGKT). Residues 474–496 (REAAAAQQSTAQQAAPAEKEPAA) form a disordered region. The segment covering 476 to 489 (AAAAQQSTAQQAAP) has biased composition (low complexity).

The protein belongs to the ATPase alpha/beta chains family. F-type ATPases have 2 components, CF(1) - the catalytic core - and CF(0) - the membrane proton channel. CF(1) has five subunits: alpha(3), beta(3), gamma(1), delta(1), epsilon(1). CF(0) has three main subunits: a(1), b(2) and c(9-12). The alpha and beta chains form an alternating ring which encloses part of the gamma chain. CF(1) is attached to CF(0) by a central stalk formed by the gamma and epsilon chains, while a peripheral stalk is formed by the delta and b chains.

Its subcellular location is the cell inner membrane. The catalysed reaction is ATP + H2O + 4 H(+)(in) = ADP + phosphate + 5 H(+)(out). Produces ATP from ADP in the presence of a proton gradient across the membrane. The catalytic sites are hosted primarily by the beta subunits. This chain is ATP synthase subunit beta 1, found in Paraburkholderia xenovorans (strain LB400).